The sequence spans 500 residues: Probable cytosol aminopeptidase (500 aa).

Positions 268 and 273 each coordinate Mn(2+). Lys-280 is an active-site residue. Asp-291, Asp-350, and Glu-352 together coordinate Mn(2+). Arg-354 is a catalytic residue.

It belongs to the peptidase M17 family. It depends on Mn(2+) as a cofactor.

It localises to the cytoplasm. It carries out the reaction Release of an N-terminal amino acid, Xaa-|-Yaa-, in which Xaa is preferably Leu, but may be other amino acids including Pro although not Arg or Lys, and Yaa may be Pro. Amino acid amides and methyl esters are also readily hydrolyzed, but rates on arylamides are exceedingly low.. It catalyses the reaction Release of an N-terminal amino acid, preferentially leucine, but not glutamic or aspartic acids.. Its function is as follows. Presumably involved in the processing and regular turnover of intracellular proteins. Catalyzes the removal of unsubstituted N-terminal amino acids from various peptides. This is Probable cytosol aminopeptidase from Aromatoleum aromaticum (strain DSM 19018 / LMG 30748 / EbN1) (Azoarcus sp. (strain EbN1)).